Here is a 418-residue protein sequence, read N- to C-terminus: Glutamyl-tRNA reductase (418 aa).

Residues 49–52 (TCNR), Ser109, 114–116 (EPQ), and Gln120 each bind substrate. Residue Cys50 is the Nucleophile of the active site. 189-194 (GAGETI) provides a ligand contact to NADP(+).

Belongs to the glutamyl-tRNA reductase family. Homodimer.

It carries out the reaction (S)-4-amino-5-oxopentanoate + tRNA(Glu) + NADP(+) = L-glutamyl-tRNA(Glu) + NADPH + H(+). Its pathway is porphyrin-containing compound metabolism; protoporphyrin-IX biosynthesis; 5-aminolevulinate from L-glutamyl-tRNA(Glu): step 1/2. In terms of biological role, catalyzes the NADPH-dependent reduction of glutamyl-tRNA(Glu) to glutamate 1-semialdehyde (GSA). This is Glutamyl-tRNA reductase from Escherichia coli O6:K15:H31 (strain 536 / UPEC).